A 440-amino-acid polypeptide reads, in one-letter code: Thymidine phosphorylase (440 aa).

Belongs to the thymidine/pyrimidine-nucleoside phosphorylase family. In terms of assembly, homodimer.

It catalyses the reaction thymidine + phosphate = 2-deoxy-alpha-D-ribose 1-phosphate + thymine. The protein operates within pyrimidine metabolism; dTMP biosynthesis via salvage pathway; dTMP from thymine: step 1/2. The enzymes which catalyze the reversible phosphorolysis of pyrimidine nucleosides are involved in the degradation of these compounds and in their utilization as carbon and energy sources, or in the rescue of pyrimidine bases for nucleotide synthesis. This Klebsiella pneumoniae subsp. pneumoniae (strain ATCC 700721 / MGH 78578) protein is Thymidine phosphorylase.